We begin with the raw amino-acid sequence, 479 residues long: Nuclear receptor subfamily 6 group A member 1 (479 aa).

Positions 1-32 (MERDERPPSGGGGGGGSAGFLEPPAALPPPPR) are disordered. The segment covering 9-18 (SGGGGGGGSA) has biased composition (gly residues). A DNA-binding region (nuclear receptor) is located at residues 57–132 (QRTCLICGDR…MGMNRKAIRE (76 aa)). Zn(2+)-binding residues include cysteine 60, cysteine 63, cysteine 77, cysteine 80, cysteine 96, cysteine 102, cysteine 112, and cysteine 115. 2 NR C4-type zinc fingers span residues 60-80 (CLIC…CEGC) and 96-120 (CSRD…LLKC). Disordered regions lie at residues 131-150 (REDG…QISE) and 162-198 (FEEE…TLSS). Positions 165-177 (EANHWSNHGDSDH) are enriched in basic and acidic residues. The sufficient for interaction with UIMC1 stretch occupies residues 172–252 (HGDSDHSSPG…RSLDPQSYSL (81 aa)). The segment covering 178–198 (SSPGNRASESNQPSPGSTLSS) has biased composition (polar residues). The NR LBD domain maps to 248 to 479 (QSYSLIHQLV…HSCKTSVGKE (232 aa)).

The protein belongs to the nuclear hormone receptor family. NR6 subfamily. As to quaternary structure, homodimer. Interacts with UIMC1.

The protein localises to the nucleus. In terms of biological role, orphan nuclear receptor that binds to a response element containing the sequence 5'-TCAAGGTCA-3'. Acts as a regulator of embryonic stem cell pluripotency by mediating repression of POU5F1/OCT4: binds to the DR0 element within the POU5F1/OCT4 promoter and inhibits POU5F1/OCT4 expression during embryonic stem cell differentiation. Involved in the regulation of gene expression in germ cell development during gametogenesis. The chain is Nuclear receptor subfamily 6 group A member 1 (NR6A1) from Sus scrofa (Pig).